Reading from the N-terminus, the 150-residue chain is 16 kDa phloem protein 1 (150 aa).

The 108-residue stretch at M1–S108 folds into the C2 domain. Positions 20, 27, 78, 80, and 86 each coordinate Ca(2+).

Ca(2+) serves as cofactor. In terms of tissue distribution, sieve elements of leaves, stems, roots and flowers.

Binds to both sense and antisense RNA. Interacts with mesophyll plasmodesmata to mediate its own cell-to-cell transport and potentiate RNA trafficking. This is 16 kDa phloem protein 1 (PP16-1) from Cucurbita maxima (Pumpkin).